Here is an 88-residue protein sequence, read N- to C-terminus: Small ribosomal subunit protein uS17 (88 aa).

This sequence belongs to the universal ribosomal protein uS17 family. As to quaternary structure, part of the 30S ribosomal subunit.

One of the primary rRNA binding proteins, it binds specifically to the 5'-end of 16S ribosomal RNA. In Lactobacillus gasseri (strain ATCC 33323 / DSM 20243 / BCRC 14619 / CIP 102991 / JCM 1131 / KCTC 3163 / NCIMB 11718 / NCTC 13722 / AM63), this protein is Small ribosomal subunit protein uS17.